Reading from the N-terminus, the 139-residue chain is Ribosomal RNA large subunit methyltransferase H (139 aa).

S-adenosyl-L-methionine-binding positions include L57, G88, and 107–112; that span reads LSAMTF.

Belongs to the RNA methyltransferase RlmH family. In terms of assembly, homodimer.

The protein localises to the cytoplasm. The enzyme catalyses pseudouridine(1915) in 23S rRNA + S-adenosyl-L-methionine = N(3)-methylpseudouridine(1915) in 23S rRNA + S-adenosyl-L-homocysteine + H(+). Functionally, specifically methylates the pseudouridine at position 1915 (m3Psi1915) in 23S rRNA. The chain is Ribosomal RNA large subunit methyltransferase H from Solibacter usitatus (strain Ellin6076).